We begin with the raw amino-acid sequence, 195 residues long: ATP-dependent Clp protease proteolytic subunit (195 aa).

The active-site Nucleophile is Ser-99. The active site involves His-124.

The protein belongs to the peptidase S14 family. As to quaternary structure, fourteen ClpP subunits assemble into 2 heptameric rings which stack back to back to give a disk-like structure with a central cavity, resembling the structure of eukaryotic proteasomes.

Its subcellular location is the cytoplasm. The enzyme catalyses Hydrolysis of proteins to small peptides in the presence of ATP and magnesium. alpha-casein is the usual test substrate. In the absence of ATP, only oligopeptides shorter than five residues are hydrolyzed (such as succinyl-Leu-Tyr-|-NHMec, and Leu-Tyr-Leu-|-Tyr-Trp, in which cleavage of the -Tyr-|-Leu- and -Tyr-|-Trp bonds also occurs).. Cleaves peptides in various proteins in a process that requires ATP hydrolysis. Has a chymotrypsin-like activity. Plays a major role in the degradation of misfolded proteins. The sequence is that of ATP-dependent Clp protease proteolytic subunit from Desulforamulus reducens (strain ATCC BAA-1160 / DSM 100696 / MI-1) (Desulfotomaculum reducens).